The sequence spans 198 residues: MNKVLYIKANAKPEGKSRTFKISDVFIDEYKQNNPDDEIITLDLYKEDIDFLRSKDLDTVFGPKNEESKNHPTLKYAYQFAEADKYVIAAPMWNLSIPAILKAYVDYISVVGIAFKYTQEGAVGLLENKKAVYIAARGGSYAETPYELDGIYLRSILGFFGIKDITTISAEKLDVQGENVDKILEEAIDKAKETAKNF.

92-95 (MWNL) lines the FMN pocket.

The protein belongs to the azoreductase type 1 family. In terms of assembly, homodimer. FMN serves as cofactor.

The catalysed reaction is 2 a quinone + NADH + H(+) = 2 a 1,4-benzosemiquinone + NAD(+). The enzyme catalyses N,N-dimethyl-1,4-phenylenediamine + anthranilate + 2 NAD(+) = 2-(4-dimethylaminophenyl)diazenylbenzoate + 2 NADH + 2 H(+). Functionally, quinone reductase that provides resistance to thiol-specific stress caused by electrophilic quinones. Its function is as follows. Also exhibits azoreductase activity. Catalyzes the reductive cleavage of the azo bond in aromatic azo compounds to the corresponding amines. This Clostridium beijerinckii (strain ATCC 51743 / NCIMB 8052) (Clostridium acetobutylicum) protein is FMN-dependent NADH:quinone oxidoreductase.